We begin with the raw amino-acid sequence, 209 residues long: Large ribosomal subunit protein uL3 (209 aa).

Belongs to the universal ribosomal protein uL3 family. In terms of assembly, part of the 50S ribosomal subunit. Forms a cluster with proteins L14 and L19.

Its function is as follows. One of the primary rRNA binding proteins, it binds directly near the 3'-end of the 23S rRNA, where it nucleates assembly of the 50S subunit. The protein is Large ribosomal subunit protein uL3 of Brevibacillus brevis (strain 47 / JCM 6285 / NBRC 100599).